A 424-amino-acid polypeptide reads, in one-letter code: MRPLFIRNASQLVTLAGSSTAPLVKEKMNELHIIENGSVWVEDGKIAAVGTDEELSQQFQERIAEAEIVDATGKTVTPGLVDPHTHFVYAGSRESEFAMRLSGATYMEIMNAGGGIHATTKATREASKETLYEESKRRLDQFLLHGVTTVEAKSGYGLSIEHEVKQLTVAKQLDETHPVDVVSTFMGAHAVPAEWKDNPDGFVRVIVEEMIPKVSELGLAEFNDVFCERGVFTPEQARIILEAGKAYGLMPKIHADEIEPYGGAELAAEVGAVSADHLLRASDEGIRRMAEKGVIAVLLPGTAFFLMTKAANARKIIDAGAAVALSTDCNPGSSPTVSLPLIMNLGCLQMGMTPAEALAAVTINAAHAINRGHEIGSIEVGKKADLVLFDVPNYMQLIYHYGMNHTDTVVKNGRVVVKSGRLCY.

Positions 84 and 86 each coordinate Fe(3+). The Zn(2+) site is built by H84 and H86. Residues R93, Y156, and H189 each coordinate 4-imidazolone-5-propanoate. Residue Y156 participates in N-formimidoyl-L-glutamate binding. Residue H254 participates in Fe(3+) binding. H254 is a Zn(2+) binding site. E257 is a 4-imidazolone-5-propanoate binding site. D328 is a binding site for Fe(3+). Residue D328 participates in Zn(2+) binding. N-formimidoyl-L-glutamate contacts are provided by N330 and G332. 4-imidazolone-5-propanoate is bound at residue S333.

It belongs to the metallo-dependent hydrolases superfamily. HutI family. Requires Zn(2+) as cofactor. Fe(3+) serves as cofactor.

It localises to the cytoplasm. The catalysed reaction is 4-imidazolone-5-propanoate + H2O = N-formimidoyl-L-glutamate. Its pathway is amino-acid degradation; L-histidine degradation into L-glutamate; N-formimidoyl-L-glutamate from L-histidine: step 3/3. Its function is as follows. Catalyzes the hydrolytic cleavage of the carbon-nitrogen bond in imidazolone-5-propanoate to yield N-formimidoyl-L-glutamate. It is the third step in the universal histidine degradation pathway. This Geobacillus sp. (strain WCH70) protein is Imidazolonepropionase.